The sequence spans 204 residues: uncharacterized protein (204 aa).

Positions 1 to 21 are cleaved as a signal peptide; it reads MIKKFLLFAMLNIFLTNKAHS.

This is an uncharacterized protein from Borreliella burgdorferi (strain ATCC 35210 / DSM 4680 / CIP 102532 / B31) (Borrelia burgdorferi).